Consider the following 570-residue polypeptide: CRISPR-associated protein Cas8a1/Csx13 (570 aa).

Disordered regions lie at residues methionine 1 to arginine 23 and glycine 551 to serine 570.

This sequence belongs to the CRISPR-associated protein Cas8a1/Csx13 family. Myxan subtype subfamily.

Its function is as follows. CRISPR (clustered regularly interspaced short palindromic repeat) is an adaptive immune system that provides protection against mobile genetic elements (viruses, transposable elements and conjugative plasmids). CRISPR clusters contain spacers, sequences complementary to antecedent mobile elements, and target invading nucleic acids. CRISPR clusters are transcribed and processed into CRISPR RNA (crRNA). Functionally, functions in an unknown fashion to stimulate transcription of fruA independently of the intracellular A- and E-developmental signals. The chain is CRISPR-associated protein Cas8a1/Csx13 (devT) from Myxococcus xanthus (strain DK1622).